An 86-amino-acid polypeptide reads, in one-letter code: Large ribosomal subunit protein eL20 (86 aa).

This sequence belongs to the eukaryotic ribosomal protein eL20 family. In terms of assembly, part of the 50S ribosomal subunit. Binds 23S rRNA.

The polypeptide is Large ribosomal subunit protein eL20 (Metallosphaera sedula (strain ATCC 51363 / DSM 5348 / JCM 9185 / NBRC 15509 / TH2)).